A 266-amino-acid chain; its full sequence is Putative transmembrane ascorbate-dependent reductase CYB561 homolog (266 aa).

Residues 1–22 are Cytoplasmic-facing; the sequence is MSLLFDPGFVILREDQSVKLFN. The helical transmembrane segment at 23–43 threads the bilayer; that stretch reads IILVMSQVFGGLAVLLVTIWM. Positions 27–240 constitute a Cytochrome b561 domain; that stretch reads MSQVFGGLAV…YTVCVLLLVL (214 aa). The Vesicular portion of the chain corresponds to 44 to 61; sequence SKFESGFAWNEDPDKEFN. The helical transmembrane segment at 62 to 82 threads the bilayer; the sequence is YHPTFMIMGMVFLFGEALLVY. His-63, Arg-83, and Lys-90 together coordinate heme b. Residues 83–95 lie on the Cytoplasmic side of the membrane; that stretch reads RVFRNERKKFSKT. L-ascorbate contacts are provided by Lys-90 and Lys-94. Residues 96–116 traverse the membrane as a helical segment; the sequence is LHVILHSCVLVFMLMALKAVF. Heme b is bound by residues His-97, 134 to 137, and His-139; that span reads NLVS. Topologically, residues 117-141 are vesicular; sequence DYHNLHKDPSGNPAPIVNLVSLHSW. A helical membrane pass occupies residues 142 to 162; it reads IGLSVVILYFAQYIVGFITYF. Topologically, residues 163–176 are cytoplasmic; the sequence is FPGMPIPIRQLVMP. Arg-171 serves as a coordination point for L-ascorbate. The chain crosses the membrane as a helical span at residues 177-197; that stretch reads FHQMFGVLIFIFVSITVAMGI. Positions 178 and 199 each coordinate heme b. The Vesicular segment spans residues 198-219; the sequence is SERAAWKHTCWTKEGQMCAQQA. Residues 220–240 form a helical membrane-spanning segment; it reads TSSFVGVFTFLYTVCVLLLVL. Residues 241-266 are Cytoplasmic-facing; sequence NPRWKRQSLPEEEGLHHLTSSHSMSD. Lys-245 contacts heme b.

Requires heme b as cofactor.

Its subcellular location is the membrane. It carries out the reaction monodehydro-L-ascorbate radical(out) + L-ascorbate(in) = monodehydro-L-ascorbate radical(in) + L-ascorbate(out). Functionally, putative transmembrane reductase that uses ascorbate as an electron donor in the cytoplasm and transfers electrons across membranes to reduce monodehydro-L-ascorbate radical in the lumen of secretory vesicles. The chain is Putative transmembrane ascorbate-dependent reductase CYB561 homolog from Caenorhabditis elegans.